A 387-amino-acid chain; its full sequence is Phosphoglycerate kinase (387 aa).

Substrate-binding positions include 21–23, Arg36, 59–62, Arg113, and Arg146; these read DLN and HLGR. Residues Lys197, Glu314, and 340–343 each bind ATP; that span reads GGDT.

Belongs to the phosphoglycerate kinase family. Monomer.

It is found in the cytoplasm. It catalyses the reaction (2R)-3-phosphoglycerate + ATP = (2R)-3-phospho-glyceroyl phosphate + ADP. It participates in carbohydrate degradation; glycolysis; pyruvate from D-glyceraldehyde 3-phosphate: step 2/5. In Cronobacter sakazakii (strain ATCC BAA-894) (Enterobacter sakazakii), this protein is Phosphoglycerate kinase.